Reading from the N-terminus, the 463-residue chain is Nuclear hormone receptor family member nhr-79 (463 aa).

The segment at residues 3-81 (RGKCMVCDSP…AGMMRDLVQA (79 aa)) is a DNA-binding region (nuclear receptor). 2 NR C4-type zinc fingers span residues 6–27 (CMVCDSPNATNYHFGAQSCKAC) and 43–64 (CLGDGVHSCKIDHTLRLNCRHC). A disordered region spans residues 83 to 119 (REIKSDKGKNSRNSSQSEDFFSPPPEQPGPSNYFDQF). In terms of domain architecture, NR LBD spans 203–463 (YTEQVINLNM…ILKDMLKFQY (261 aa)).

The protein belongs to the nuclear hormone receptor family.

Its subcellular location is the nucleus. Functionally, orphan nuclear receptor. This is Nuclear hormone receptor family member nhr-79 (nhr-79) from Caenorhabditis elegans.